Consider the following 92-residue polypeptide: C-C motif chemokine 4 (92 aa).

Positions 1–23 (MKLCVTVLSLLVLAAAFCSPALS) are cleaved as a signal peptide. Disulfide bonds link C34–C58 and C35–C74.

It belongs to the intercrine beta (chemokine CC) family. In terms of assembly, homodimer. Interacts with CCR5. In terms of tissue distribution, detected in peripheral blood mononuclear cells and lymph nodes.

Its subcellular location is the secreted. In terms of biological role, monokine with inflammatory and chemokinetic properties. This Macaca mulatta (Rhesus macaque) protein is C-C motif chemokine 4 (CCL4).